We begin with the raw amino-acid sequence, 113 residues long: UPF0416 protein RF_0879 (113 aa).

Belongs to the UPF0416 family.

This Rickettsia felis (strain ATCC VR-1525 / URRWXCal2) (Rickettsia azadi) protein is UPF0416 protein RF_0879.